Consider the following 332-residue polypeptide: Malate dehydrogenase, cytoplasmic (332 aa).

NAD(+) is bound by residues 16-17 (QI), D43, and G90. Residue R99 coordinates oxaloacetate. NAD(+)-binding residues include Q113 and N132. The oxaloacetate site is built by N132, R163, H188, and S243. The active-site Proton acceptor is the H188.

The protein belongs to the LDH/MDH superfamily. MDH type 2 family. As to quaternary structure, monomer. As to expression, expressed constitutively in roots.

It localises to the cell membrane. The catalysed reaction is (S)-malate + NAD(+) = oxaloacetate + NADH + H(+). In terms of biological role, malate dehydrogenase; catalyzes a reversible NAD-dependent dehydrogenase reaction involved in central metabolism and redox homeostasis. This chain is Malate dehydrogenase, cytoplasmic, found in Zea mays (Maize).